The sequence spans 173 residues: Peptide methionine sulfoxide reductase MsrA (173 aa).

The active site involves Cys-10.

Belongs to the MsrA Met sulfoxide reductase family.

It carries out the reaction L-methionyl-[protein] + [thioredoxin]-disulfide + H2O = L-methionyl-(S)-S-oxide-[protein] + [thioredoxin]-dithiol. It catalyses the reaction [thioredoxin]-disulfide + L-methionine + H2O = L-methionine (S)-S-oxide + [thioredoxin]-dithiol. Functionally, has an important function as a repair enzyme for proteins that have been inactivated by oxidation. Catalyzes the reversible oxidation-reduction of methionine sulfoxide in proteins to methionine. This chain is Peptide methionine sulfoxide reductase MsrA, found in Psychrobacter arcticus (strain DSM 17307 / VKM B-2377 / 273-4).